A 235-amino-acid polypeptide reads, in one-letter code: Purine nucleoside phosphorylase DeoD-type (235 aa).

Histidine 4 lines the a purine D-ribonucleoside pocket. Residues glycine 20, arginine 24, arginine 43, and 87–90 (RVGT) contribute to the phosphate site. Residues 179–181 (EME) and 203–204 (SD) contribute to the a purine D-ribonucleoside site. The active-site Proton donor is the aspartate 204.

The protein belongs to the PNP/UDP phosphorylase family. In terms of assembly, homohexamer; trimer of homodimers.

It carries out the reaction a purine D-ribonucleoside + phosphate = a purine nucleobase + alpha-D-ribose 1-phosphate. The catalysed reaction is a purine 2'-deoxy-D-ribonucleoside + phosphate = a purine nucleobase + 2-deoxy-alpha-D-ribose 1-phosphate. Functionally, catalyzes the reversible phosphorolytic breakdown of the N-glycosidic bond in the beta-(deoxy)ribonucleoside molecules, with the formation of the corresponding free purine bases and pentose-1-phosphate. The polypeptide is Purine nucleoside phosphorylase DeoD-type (Clostridium perfringens (strain ATCC 13124 / DSM 756 / JCM 1290 / NCIMB 6125 / NCTC 8237 / Type A)).